The sequence spans 264 residues: Phosphonoacetaldehyde hydrolase (264 aa).

Aspartate 9 acts as the Nucleophile in catalysis. The Mg(2+) site is built by aspartate 9 and alanine 11. Catalysis depends on lysine 50, which acts as the Schiff-base intermediate with substrate. Aspartate 183 contributes to the Mg(2+) binding site.

It belongs to the HAD-like hydrolase superfamily. PhnX family. In terms of assembly, homodimer. It depends on Mg(2+) as a cofactor.

The enzyme catalyses phosphonoacetaldehyde + H2O = acetaldehyde + phosphate + H(+). Involved in phosphonate degradation. This Bacillus cereus (strain AH187) protein is Phosphonoacetaldehyde hydrolase.